Reading from the N-terminus, the 859-residue chain is Mismatch repair endonuclease PMS2 (859 aa).

ATP contacts are provided by Asn-45, Asp-70, Glu-109, Ala-110, and Leu-111. Disordered stretches follow at residues 391–413 (ELEK…ADEK), 427–455 (LHPT…RGVL), and 469–555 (RGSQ…KPED). 2 stretches are compositionally biased toward basic and acidic residues: residues 427 to 439 (LHPT…RGPE) and 485 to 495 (CMDREKIEKDS). Positions 512–525 (EVASSFSSDYNVSS) are enriched in polar residues. The Nuclear localization signal motif lies at 574 to 577 (KRFK). The segment at 578-597 (TEERPSNVNISQRLPGPQST) is disordered. A compositionally biased stretch (polar residues) spans 583–597 (SNVNISQRLPGPQST).

This sequence belongs to the DNA mismatch repair MutL/HexB family. In terms of assembly, heterodimer of PMS2 and MLH1 (MutL alpha); this interaction is required for the stability of both partners. Forms a ternary complex with MutS alpha (MSH2-MSH6) or MutS beta (MSH2-MSH3). Part of the BRCA1-associated genome surveillance complex (BASC), which contains BRCA1, MSH2, MSH6, MLH1, ATM, BLM, PMS2 and the RAD50-MRE11-NBS1 protein complex. This association could be a dynamic process changing throughout the cell cycle and within subnuclear domains. Interacts with MTMR15/FAN1.

The protein resides in the nucleus. The catalysed reaction is ATP + H2O = ADP + phosphate + H(+). Its function is as follows. Component of the post-replicative DNA mismatch repair system (MMR). Heterodimerizes with MLH1 to form MutL alpha. DNA repair is initiated by MutS alpha (MSH2-MSH6) or MutS beta (MSH2-MSH3) binding to a dsDNA mismatch, then MutL alpha is recruited to the heteroduplex. Assembly of the MutL-MutS-heteroduplex ternary complex in presence of RFC and PCNA is sufficient to activate endonuclease activity of PMS2. It introduces single-strand breaks near the mismatch and thus generates new entry points for the exonuclease EXO1 to degrade the strand containing the mismatch. DNA methylation would prevent cleavage and therefore assure that only the newly mutated DNA strand is going to be corrected. MutL alpha (MLH1-PMS2) interacts physically with the clamp loader subunits of DNA polymerase III, suggesting that it may play a role to recruit the DNA polymerase III to the site of the MMR. Also implicated in DNA damage signaling, a process which induces cell cycle arrest and can lead to apoptosis in case of major DNA damages. Possesses an ATPase activity, but in the absence of gross structural changes, ATP hydrolysis may not be necessary for proficient mismatch repair. The protein is Mismatch repair endonuclease PMS2 of Mus musculus (Mouse).